Here is a 449-residue protein sequence, read N- to C-terminus: Na(+)/H(+) antiporter NhaA 2 (449 aa).

A run of 11 helical transmembrane segments spans residues 32–52, 87–107, 114–134, 145–165, 174–194, 202–222, 233–253, 318–338, 347–367, 382–402, and 417–437; these read IEAT…TLSN, GLMT…VVLG, MVAL…GLYL, GWGV…ALLG, VFLL…VAVG, TALA…LLGV, AIIW…GVIL, WVAF…PITI, LAVM…FAWL, WGGL…ALFI, and LGIL…LCAL.

The protein belongs to the NhaA Na(+)/H(+) (TC 2.A.33) antiporter family.

Its subcellular location is the cell inner membrane. The enzyme catalyses Na(+)(in) + 2 H(+)(out) = Na(+)(out) + 2 H(+)(in). In terms of biological role, na(+)/H(+) antiporter that extrudes sodium in exchange for external protons. This chain is Na(+)/H(+) antiporter NhaA 2, found in Acidiphilium cryptum (strain JF-5).